Consider the following 557-residue polypeptide: Small ribosomal subunit protein bS1 (557 aa).

S1 motif domains follow at residues 21–87 (GSIV…LSRE), 105–171 (SATV…VSRR), 192–260 (GMEV…LGLK), 277–347 (GTKL…LGLK), 364–434 (GDRV…LGVK), and 451–520 (GAIV…LSIR).

Belongs to the bacterial ribosomal protein bS1 family.

In terms of biological role, binds mRNA; thus facilitating recognition of the initiation point. It is needed to translate mRNA with a short Shine-Dalgarno (SD) purine-rich sequence. The polypeptide is Small ribosomal subunit protein bS1 (rpsA) (Dickeya dadantii (strain 3937) (Erwinia chrysanthemi (strain 3937))).